A 201-amino-acid chain; its full sequence is Retinol-binding protein 4 (201 aa).

Positions 1 to 18 (MKWVWALLLLAALGSGRA) are cleaved as a signal peptide. 3 cysteine pairs are disulfide-bonded: C22/C178, C88/C192, and C138/C147. Q116 is a substrate binding site. R139 is subject to Omega-N-methylarginine.

It belongs to the calycin superfamily. Lipocalin family. Interacts with TTR. Interaction with TTR prevents its loss by filtration through the kidney glomeruli. Interacts with STRA6. In terms of tissue distribution, detected in blood plasma and in urine (at protein level).

It localises to the secreted. Its function is as follows. Retinol-binding protein that mediates retinol transport in blood plasma. Delivers retinol from the liver stores to the peripheral tissues. Transfers the bound all-trans retinol to STRA6, that then facilitates retinol transport across the cell membrane. This is Retinol-binding protein 4 (RBP4) from Homo sapiens (Human).